We begin with the raw amino-acid sequence, 213 residues long: Uracil phosphoribosyltransferase (213 aa).

Residues R78, R103, and 130–138 contribute to the 5-phospho-alpha-D-ribose 1-diphosphate site; that span reads DPMLATGGT. Residues I197 and 202-204 contribute to the uracil site; that span reads GDA. D203 contributes to the 5-phospho-alpha-D-ribose 1-diphosphate binding site.

Belongs to the UPRTase family. Mg(2+) serves as cofactor.

The enzyme catalyses UMP + diphosphate = 5-phospho-alpha-D-ribose 1-diphosphate + uracil. It functions in the pathway pyrimidine metabolism; UMP biosynthesis via salvage pathway; UMP from uracil: step 1/1. Its activity is regulated as follows. Allosterically activated by GTP. Its function is as follows. Catalyzes the conversion of uracil and 5-phospho-alpha-D-ribose 1-diphosphate (PRPP) to UMP and diphosphate. The chain is Uracil phosphoribosyltransferase from Nocardioides sp. (strain ATCC BAA-499 / JS614).